Consider the following 324-residue polypeptide: E3 ubiquitin-protein ligase SIAH2 (324 aa).

The segment covering Met1–Cys15 has biased composition (polar residues). The segment at Met1–Gly42 is disordered. At Ser6 the chain carries Phosphoserine. The residue at position 16 (Ser16) is a Phosphoserine; by DYRK2. Residues Lys17–Pro32 are compositionally biased toward pro residues. Residue Thr26 is modified to Phosphothreonine; by DYRK2. Ser28 carries the post-translational modification Phosphoserine; by DYRK2 and MAPK14. Low complexity predominate over residues Pro33–Gly42. Phosphoserine; by DYRK2 is present on Ser68. Residues Cys80–Arg115 form an RING-type zinc finger. The residue at position 119 (Thr119) is a Phosphothreonine; by DYRK2. Positions Val130–Cys322 are SBD. The SIAH-type zinc-finger motif lies at Ala133–Lys193. Zn(2+) contacts are provided by Cys138, Cys145, His157, Cys161, Cys168, Cys175, His187, and His192.

It belongs to the SINA (Seven in absentia) family. As to quaternary structure, homodimer. Interacts with UBE2E2. Interacts with PEG3. Interacts with VAV1, without mediating its ubiquitin-mediated degradation. Interacts with CACYBP/SIP. Probable component of some large E3 complex possibly composed of UBE2D1, SIAH2, CACYBP/SIP, SKP1, APC and TBL1X. Interacts with PEG10, which may inhibit its activity. Interacts with EGLN2 and SNCAIP. Interacts with DYRK2. Interacts with NR1D1 and NR1D2. Interacts with DCC. Interacts with AXIN1. Phosphorylated at Ser-28 by MAPK14, which mediates the degradation by the proteasome of EGLN3. Phosphorylated at Ser-28 by DYRK2; this increases the ubiquitin ligase activity and promotes degradation of EGLN3. In terms of tissue distribution, widely expressed at low level.

Its subcellular location is the cytoplasm. The protein resides in the nucleus. It carries out the reaction S-ubiquitinyl-[E2 ubiquitin-conjugating enzyme]-L-cysteine + [acceptor protein]-L-lysine = [E2 ubiquitin-conjugating enzyme]-L-cysteine + N(6)-ubiquitinyl-[acceptor protein]-L-lysine.. Its pathway is protein modification; protein ubiquitination. With respect to regulation, inhibited by interaction with SNCAIP (isoform 2, but not isoform 1). May be inhibited by interaction with PEG10. Its function is as follows. E3 ubiquitin-protein ligase that mediates ubiquitination and subsequent proteasomal degradation of target proteins. E3 ubiquitin ligases accept ubiquitin from an E2 ubiquitin-conjugating enzyme in the form of a thioester and then directly transfers the ubiquitin to targeted substrates. Mediates E3 ubiquitin ligase activity either through direct binding to substrates or by functioning as the essential RING domain subunit of larger E3 complexes. Triggers the ubiquitin-mediated degradation of many substrates, including proteins involved in transcription regulation (GPS2, POU2AF1, PML, NCOR1), a cell surface receptor (DCC), an antiapoptotic protein (BAG1), and a protein involved in synaptic vesicle function in neurons (SYP). Mediates ubiquitination and proteasomal degradation of DYRK2 in response to hypoxia. It is thereby involved in apoptosis, tumor suppression, cell cycle, transcription and signaling processes. Has some overlapping function with SIAH1. Triggers the ubiquitin-mediated degradation of TRAF2, whereas SIAH1 does not. Promotes monoubiquitination of SNCA. Regulates cellular clock function via ubiquitination of the circadian transcriptional repressors NR1D1 and NR1D2 leading to their proteasomal degradation. Plays an important role in mediating the rhythmic degradation/clearance of NR1D1 and NR1D2 contributing to their circadian profile of protein abundance. Mediates ubiquitination and degradation of EGLN2 and EGLN3 in response to the unfolded protein response (UPR), leading to their degradation and subsequent stabilization of ATF4. Also part of the Wnt signaling pathway in which it mediates the Wnt-induced ubiquitin-mediated proteasomal degradation of AXIN1. This Homo sapiens (Human) protein is E3 ubiquitin-protein ligase SIAH2 (SIAH2).